Consider the following 72-residue polypeptide: MAKEEVLEFPGVVTELLPNAMFRVKLENEHEIIAHTAGRMRKNRIRVLAGDKVLVEMTPYDLTKGRITYRLK.

The S1-like domain occupies 1 to 72 (MAKEEVLEFP…TKGRITYRLK (72 aa)).

Belongs to the IF-1 family. Component of the 30S ribosomal translation pre-initiation complex which assembles on the 30S ribosome in the order IF-2 and IF-3, IF-1 and N-formylmethionyl-tRNA(fMet); mRNA recruitment can occur at any time during PIC assembly.

The protein resides in the cytoplasm. One of the essential components for the initiation of protein synthesis. Stabilizes the binding of IF-2 and IF-3 on the 30S subunit to which N-formylmethionyl-tRNA(fMet) subsequently binds. Helps modulate mRNA selection, yielding the 30S pre-initiation complex (PIC). Upon addition of the 50S ribosomal subunit IF-1, IF-2 and IF-3 are released leaving the mature 70S translation initiation complex. The polypeptide is Translation initiation factor IF-1 (Brucella suis biovar 1 (strain 1330)).